Consider the following 517-residue polypeptide: Synaptic vesicular amine transporter (517 aa).

Over 1–20 the chain is Cytoplasmic; that stretch reads MALSELALLRRLQESRHSRK. The chain crosses the membrane as a helical span at residues 21-41; that stretch reads LILFIVFLALLLDNMLLTVVV. Over 42 to 132 the chain is Extracellular; that stretch reads PIIPSYLYSI…EDKDLLNENV (91 aa). 3 N-linked (GlcNAc...) asparagine glycosylation sites follow: asparagine 84, asparagine 91, and asparagine 112. An intrachain disulfide couples cysteine 120 to cysteine 327. Residues 133 to 153 traverse the membrane as a helical segment; sequence QVGLLFASKATVQLLTNPFIG. Residues 154–162 are Cytoplasmic-facing; sequence LLTNRIGYP. A helical transmembrane segment spans residues 163–183; sequence IPMFTGFCIMFISTVMFAFSR. The Extracellular portion of the chain corresponds to 184–192; it reads TYAFLLIAR. A helical membrane pass occupies residues 193–213; that stretch reads SLQGIGSSCSSVAGMGMLASV. Over 214-222 the chain is Cytoplasmic; the sequence is YTDDEERGN. The chain crosses the membrane as a helical span at residues 223–245; the sequence is AMGIALGGLAMGVLVGPPFGSVL. Serotonin-binding residues include leucine 231 and valine 235. Residues 246–251 are Extracellular-facing; the sequence is YEFVGK. A helical membrane pass occupies residues 252-274; the sequence is TAPFLVLAALVLLDGAIQLFVLQ. Residues 275–294 are Cytoplasmic-facing; the sequence is PSRVQPESQKGTPLTTLLRD. Residues 295 to 314 traverse the membrane as a helical segment; it reads PYILIAAGSICFANMGIAML. Residues asparagine 308, isoleucine 311, glutamate 315, phenylalanine 337, and tyrosine 344 each contribute to the serotonin site. Over 315–331 the chain is Extracellular; it reads EPALPIWMMETMCSHKW. The chain crosses the membrane as a helical span at residues 332–355; the sequence is QLGVAFLPASVSYLIGTNVFGILA. The Cytoplasmic segment spans residues 356–360; sequence HKMGR. The chain crosses the membrane as a helical span at residues 361 to 381; it reads WLCALLGMIIVGMSILCIPLA. Topologically, residues 382–392 are extracellular; that stretch reads KNIYGLIAPNF. The chain crosses the membrane as a helical span at residues 393–413; the sequence is GVGFAIGMVDSSMMPIMGYLV. Position 402 (aspartate 402) interacts with serotonin. Topologically, residues 414–417 are cytoplasmic; sequence DLRH. The chain crosses the membrane as a helical span at residues 418-438; it reads VSVYGSVYAIADVAFCMGYAI. Tyrosine 436 is a binding site for serotonin. At 439-443 the chain is on the extracellular side; sequence GPSAG. The chain crosses the membrane as a helical span at residues 444-465; it reads GAIAKAIGFPWLMTIIGIIDIL. Residues 466-517 lie on the Cytoplasmic side of the membrane; it reads FAPLCFFLRSPPAKEEKMAILMDHNCPIKTKMYTQNSSQSHPIGEDEESESD. A phosphoserine; by CK2 mark is found at serine 514 and serine 516.

It belongs to the major facilitator superfamily. Vesicular transporter family. Interacts with SLC6A3.

It is found in the cytoplasmic vesicle. The protein localises to the secretory vesicle. It localises to the synaptic vesicle membrane. The protein resides in the secretory vesicle membrane. Its subcellular location is the cell projection. It is found in the axon. The protein localises to the dendrite. It carries out the reaction serotonin(in) + 2 H(+)(out) = serotonin(out) + 2 H(+)(in). The enzyme catalyses dopamine(in) + 2 H(+)(out) = dopamine(out) + 2 H(+)(in). The catalysed reaction is histamine(in) + 2 H(+)(out) = histamine(out) + 2 H(+)(in). Its activity is regulated as follows. Strongly inhibited by reserpine and tetrabenazine. Also inhibited to a lesser extent by ketanserin and fenfluramine. Reserpine and ketanserin inhibit by blocking the substrate-binding pocket. Tetrabenazine traps SLC18A2/VMAT2 in an occluded conformation and its inhibition is specific to SLC18A2/VMAT2 but not SLC18A1/VMAT1. In terms of biological role, electrogenic antiporter that exchanges one cationic monoamine with two intravesicular protons across the membrane of secretory and synaptic vesicles. Uses the electrochemical proton gradient established by the V-type proton-pump ATPase to accumulate high concentrations of monoamines inside the vesicles prior to their release via exocytosis. Transports a variety of catecholamines such as dopamine, adrenaline and noradrenaline, histamine, and indolamines such as serotonin. Regulates the transvesicular monoaminergic gradient that determines the quantal size. Mediates somatodendritic dopamine release in hippocampal neurons, likely as part of a regulated secretory pathway that integrates retrograde synaptic signals. Acts as a primary transporter for striatal dopamine loading ensuring impulse-dependent release of dopamine at the synaptic cleft. Responsible for histamine and serotonin storage and subsequent corelease from mast cell granules. This is Synaptic vesicular amine transporter (SLC18A2) from Bos taurus (Bovine).